We begin with the raw amino-acid sequence, 400 residues long: Enoyl-[acyl-carrier-protein] reductase [NADH] (400 aa).

Residues 48 to 53, 74 to 75, 111 to 112, and 139 to 140 each bind NAD(+); these read GSSSGY, FE, DA, and LA. Tyrosine 225 lines the substrate pocket. Catalysis depends on tyrosine 235, which acts as the Proton donor. Residues lysine 244 and 273–275 each bind NAD(+); that span reads VVT.

It belongs to the TER reductase family. As to quaternary structure, monomer.

It catalyses the reaction a 2,3-saturated acyl-[ACP] + NAD(+) = a (2E)-enoyl-[ACP] + NADH + H(+). The protein operates within lipid metabolism; fatty acid biosynthesis. In terms of biological role, involved in the final reduction of the elongation cycle of fatty acid synthesis (FAS II). Catalyzes the reduction of a carbon-carbon double bond in an enoyl moiety that is covalently linked to an acyl carrier protein (ACP). This chain is Enoyl-[acyl-carrier-protein] reductase [NADH], found in Shewanella baltica (strain OS185).